An 874-amino-acid polypeptide reads, in one-letter code: Bifunctional uridylyltransferase/uridylyl-removing enzyme (874 aa).

The uridylyltransferase stretch occupies residues 1–336 (MIDTSTITNP…DNGKTVETIQ (336 aa)). The tract at residues 337–695 (LSDDFQIRGH…LSKKATRGGT (359 aa)) is uridylyl-removing. Residues 455-577 (VDEHSVRLIK…VRDEERLDYL (123 aa)) enclose the HD domain. ACT domains are found at residues 696 to 779 (EVFV…RAPR) and 802 to 874 (TMEL…TPQD).

The protein belongs to the GlnD family. The cofactor is Mg(2+).

It catalyses the reaction [protein-PII]-L-tyrosine + UTP = [protein-PII]-uridylyl-L-tyrosine + diphosphate. It carries out the reaction [protein-PII]-uridylyl-L-tyrosine + H2O = [protein-PII]-L-tyrosine + UMP + H(+). Uridylyltransferase (UTase) activity is inhibited by glutamine, while glutamine activates uridylyl-removing (UR) activity. Its function is as follows. Modifies, by uridylylation and deuridylylation, the PII regulatory proteins (GlnB and homologs), in response to the nitrogen status of the cell that GlnD senses through the glutamine level. Under low glutamine levels, catalyzes the conversion of the PII proteins and UTP to PII-UMP and PPi, while under higher glutamine levels, GlnD hydrolyzes PII-UMP to PII and UMP (deuridylylation). Thus, controls uridylylation state and activity of the PII proteins, and plays an important role in the regulation of nitrogen assimilation and metabolism. The chain is Bifunctional uridylyltransferase/uridylyl-removing enzyme from Photobacterium profundum (strain SS9).